The primary structure comprises 139 residues: Ribonuclease P/MRP protein subunit POP5 (139 aa).

Belongs to the eukaryotic/archaeal RNase P protein component 2 family.

It is found in the nucleus. The catalysed reaction is Endonucleolytic cleavage of RNA, removing 5'-extranucleotides from tRNA precursor.. In terms of biological role, component of ribonuclease P, a protein complex that generates mature tRNA molecules by cleaving their 5'-ends. Also a component of RNase MRP, which cleaves pre-rRNA sequences. The chain is Ribonuclease P/MRP protein subunit POP5 from Schizosaccharomyces pombe (strain 972 / ATCC 24843) (Fission yeast).